A 346-amino-acid chain; its full sequence is Nicotinate-nucleotide--dimethylbenzimidazole phosphoribosyltransferase (346 aa).

The active-site Proton acceptor is the Glu-312.

This sequence belongs to the CobT family.

The catalysed reaction is 5,6-dimethylbenzimidazole + nicotinate beta-D-ribonucleotide = alpha-ribazole 5'-phosphate + nicotinate + H(+). It participates in nucleoside biosynthesis; alpha-ribazole biosynthesis; alpha-ribazole from 5,6-dimethylbenzimidazole: step 1/2. In terms of biological role, catalyzes the synthesis of alpha-ribazole-5'-phosphate from nicotinate mononucleotide (NAMN) and 5,6-dimethylbenzimidazole (DMB). The sequence is that of Nicotinate-nucleotide--dimethylbenzimidazole phosphoribosyltransferase from Cupriavidus necator (strain ATCC 17699 / DSM 428 / KCTC 22496 / NCIMB 10442 / H16 / Stanier 337) (Ralstonia eutropha).